The following is an 85-amino-acid chain: Large ribosomal subunit protein uL29 (85 aa).

It belongs to the universal ribosomal protein uL29 family.

The chain is Large ribosomal subunit protein uL29 from Thermobifida fusca (strain YX).